Reading from the N-terminus, the 206-residue chain is Large ribosomal subunit protein uL4 (206 aa).

Residues 63–97 (MYKQKGTGRARHHSARAPQFRGGGKAHGPVVRSHE) form a disordered region. Positions 64–77 (YKQKGTGRARHHSA) are enriched in basic residues.

It belongs to the universal ribosomal protein uL4 family. In terms of assembly, part of the 50S ribosomal subunit.

One of the primary rRNA binding proteins, this protein initially binds near the 5'-end of the 23S rRNA. It is important during the early stages of 50S assembly. It makes multiple contacts with different domains of the 23S rRNA in the assembled 50S subunit and ribosome. Its function is as follows. Forms part of the polypeptide exit tunnel. This is Large ribosomal subunit protein uL4 from Rhizobium rhizogenes (strain K84 / ATCC BAA-868) (Agrobacterium radiobacter).